We begin with the raw amino-acid sequence, 160 residues long: Sec-independent protein translocase protein TatB (160 aa).

A helical membrane pass occupies residues 1 to 21 (MFGMGFFEILVVLVVAIIFLG). The segment at 118 to 160 (HLNEEVSNEEALNKEVSSDESPKEVQLATDNNTKEHDKEKENV) is disordered. 2 stretches are compositionally biased toward basic and acidic residues: residues 128–140 (ALNKEVSSDESPK) and 149–160 (NTKEHDKEKENV).

It belongs to the TatB family. In terms of assembly, the Tat system comprises two distinct complexes: a TatABC complex, containing multiple copies of TatA, TatB and TatC subunits, and a separate TatA complex, containing only TatA subunits. Substrates initially bind to the TatABC complex, which probably triggers association of the separate TatA complex to form the active translocon.

It is found in the cell inner membrane. Its function is as follows. Part of the twin-arginine translocation (Tat) system that transports large folded proteins containing a characteristic twin-arginine motif in their signal peptide across membranes. Together with TatC, TatB is part of a receptor directly interacting with Tat signal peptides. TatB may form an oligomeric binding site that transiently accommodates folded Tat precursor proteins before their translocation. The polypeptide is Sec-independent protein translocase protein TatB (Helicobacter pylori (strain ATCC 700392 / 26695) (Campylobacter pylori)).